The following is a 296-amino-acid chain: Transposase for insertion sequence element IS629 (296 aa).

In terms of domain architecture, Integrase catalytic spans 125–285 (VAERPDQLWV…TPPAEAEKAY (161 aa)).

In terms of biological role, involved in the transposition of the insertion sequence. This Shigella sonnei protein is Transposase for insertion sequence element IS629.